Consider the following 124-residue polypeptide: Large ribosomal subunit protein bL12 (124 aa).

Belongs to the bacterial ribosomal protein bL12 family. In terms of assembly, homodimer. Part of the ribosomal stalk of the 50S ribosomal subunit. Forms a multimeric L10(L12)X complex, where L10 forms an elongated spine to which 2 to 4 L12 dimers bind in a sequential fashion. Binds GTP-bound translation factors.

In terms of biological role, forms part of the ribosomal stalk which helps the ribosome interact with GTP-bound translation factors. Is thus essential for accurate translation. The polypeptide is Large ribosomal subunit protein bL12 (Vesicomyosocius okutanii subsp. Calyptogena okutanii (strain HA)).